Reading from the N-terminus, the 468-residue chain is 6-phosphogluconate dehydrogenase, decarboxylating (468 aa).

NADP(+)-binding positions include 10–15 (GMAVMG), 33–35 (NRS), 74–76 (VKA), and Asn-102. Substrate is bound by residues Asn-102 and 128-130 (SGG). Lys-183 acts as the Proton acceptor in catalysis. 186-187 (HN) contacts substrate. The Proton donor role is filled by Glu-190. Residues Tyr-191, Lys-260, Arg-287, Arg-445, and His-451 each coordinate substrate.

This sequence belongs to the 6-phosphogluconate dehydrogenase family. As to quaternary structure, homodimer.

The enzyme catalyses 6-phospho-D-gluconate + NADP(+) = D-ribulose 5-phosphate + CO2 + NADPH. It participates in carbohydrate degradation; pentose phosphate pathway; D-ribulose 5-phosphate from D-glucose 6-phosphate (oxidative stage): step 3/3. Its function is as follows. Catalyzes the oxidative decarboxylation of 6-phosphogluconate to ribulose 5-phosphate and CO(2), with concomitant reduction of NADP to NADPH. This Escherichia coli protein is 6-phosphogluconate dehydrogenase, decarboxylating (gnd).